We begin with the raw amino-acid sequence, 131 residues long: Ribosome-binding factor A (131 aa).

This sequence belongs to the RbfA family. In terms of assembly, monomer. Binds 30S ribosomal subunits, but not 50S ribosomal subunits or 70S ribosomes.

The protein resides in the cytoplasm. In terms of biological role, one of several proteins that assist in the late maturation steps of the functional core of the 30S ribosomal subunit. Associates with free 30S ribosomal subunits (but not with 30S subunits that are part of 70S ribosomes or polysomes). Required for efficient processing of 16S rRNA. May interact with the 5'-terminal helix region of 16S rRNA. The polypeptide is Ribosome-binding factor A (Picosynechococcus sp. (strain ATCC 27264 / PCC 7002 / PR-6) (Agmenellum quadruplicatum)).